Reading from the N-terminus, the 268-residue chain is Phosphatidylglycerol--prolipoprotein diacylglyceryl transferase (268 aa).

4 helical membrane-spanning segments follow: residues 14-34, 57-77, 90-110, and 117-137; these read LGPIKIHWYGLMYLLGIFAGW, LTFYVALGVILGGRIGYIIFY, FFLWDGGMSFHGGFIGVLIAF, and IGANFFDLGEFVAPVIPIGLG. A 1,2-diacyl-sn-glycero-3-phospho-(1'-sn-glycerol) is bound at residue R140. 3 helical membrane-spanning segments follow: residues 174–194, 200–220, and 238–258; these read QLFEFFFEGVVLFSVLWLVTI, YLVLGLFMFLYGCARFICEFF, and GQILSIPMILLGAVILIAVFI.

It belongs to the Lgt family.

It is found in the cell inner membrane. It catalyses the reaction L-cysteinyl-[prolipoprotein] + a 1,2-diacyl-sn-glycero-3-phospho-(1'-sn-glycerol) = an S-1,2-diacyl-sn-glyceryl-L-cysteinyl-[prolipoprotein] + sn-glycerol 1-phosphate + H(+). Its pathway is protein modification; lipoprotein biosynthesis (diacylglyceryl transfer). Functionally, catalyzes the transfer of the diacylglyceryl group from phosphatidylglycerol to the sulfhydryl group of the N-terminal cysteine of a prolipoprotein, the first step in the formation of mature lipoproteins. In Francisella tularensis subsp. novicida (strain U112), this protein is Phosphatidylglycerol--prolipoprotein diacylglyceryl transferase.